The chain runs to 156 residues: Transcription factor E (156 aa).

The region spanning 1–72 (MYGEKAKKVL…LWILNIDQIE (72 aa)) is the HTH TFE/IIEalpha-type domain.

Belongs to the TFE family. Monomer. Interaction with RNA polymerase subunits RpoF and RpoE is necessary for Tfe stimulatory transcription activity. Able to interact with Tbp and RNA polymerase in the absence of DNA promoter. Interacts both with the preinitiation and elongation complexes.

Its function is as follows. Transcription factor that plays a role in the activation of archaeal genes transcribed by RNA polymerase. Facilitates transcription initiation by enhancing TATA-box recognition by TATA-box-binding protein (Tbp), and transcription factor B (Tfb) and RNA polymerase recruitment. Not absolutely required for transcription in vitro, but particularly important in cases where Tbp or Tfb function is not optimal. It dynamically alters the nucleic acid-binding properties of RNA polymerases by stabilizing the initiation complex and destabilizing elongation complexes. Seems to translocate with the RNA polymerase following initiation and acts by binding to the non template strand of the transcription bubble in elongation complexes. The chain is Transcription factor E from Staphylothermus marinus (strain ATCC 43588 / DSM 3639 / JCM 9404 / F1).